A 389-amino-acid polypeptide reads, in one-letter code: Phosphatidylglycerol--prolipoprotein diacylglyceryl transferase (389 aa).

4 consecutive transmembrane segments (helical) span residues 28 to 48 (IIVA…LIYF), 58 to 78 (FFIF…YFLI), 98 to 118 (LAIQ…FNVF), and 148 to 168 (ISVF…QAIG). Arg169 lines the a 1,2-diacyl-sn-glycero-3-phospho-(1'-sn-glycerol) pocket. The next 3 membrane-spanning stretches (helical) occupy residues 220–240 (IPLF…IYFV), 281–301 (IVFS…CQTL), and 309–329 (FWTY…TTLF).

The protein belongs to the Lgt family.

The protein localises to the cell membrane. It carries out the reaction L-cysteinyl-[prolipoprotein] + a 1,2-diacyl-sn-glycero-3-phospho-(1'-sn-glycerol) = an S-1,2-diacyl-sn-glyceryl-L-cysteinyl-[prolipoprotein] + sn-glycerol 1-phosphate + H(+). It functions in the pathway protein modification; lipoprotein biosynthesis (diacylglyceryl transfer). In terms of biological role, catalyzes the transfer of the diacylglyceryl group from phosphatidylglycerol to the sulfhydryl group of the N-terminal cysteine of a prolipoprotein, the first step in the formation of mature lipoproteins. The chain is Phosphatidylglycerol--prolipoprotein diacylglyceryl transferase from Mycoplasma pneumoniae (strain ATCC 29342 / M129 / Subtype 1) (Mycoplasmoides pneumoniae).